The primary structure comprises 1456 residues: Leucine-rich repeat-containing protein 9 (1456 aa).

LRR repeat units lie at residues 53-78 (FHNLSSLTIVAQDIREISGLETCLQL), 97-119 (CRNLEKLYLYYNKISKIENLEKL), 120-141 (IKLEVLWLNHNMIKNIEGLQTL), 142-164 (KNLKDLNLAGNLVSSIGRCLDPN), 166-188 (QLEKLNLSGNQITSFKDLTNLTK), 190-212 (TRLKDLCLNDPQYKSNPVCQLCN), 224-248 (LQRLDTFDVSAKQIKELADSTAMKK), and 264-287 (NEELEKLNDRKCKLQKLPEERIKL). The interval 305-325 (SSKGQSDTTPEAEKPRNSEVV) is disordered. An LRR 9 repeat occupies 339–362 (LSALDDRVTFWNKKLHEIEAIYRT). Tyr-525 bears the Phosphotyrosine mark. LRR repeat units follow at residues 661-683 (KPRPKLISLDEKTIISLAKTNIY), 684-705 (SHIVNLNLHGNSLSKLRDLAKL), 706-727 (TGLRKLNISFNEFTCLDDVYHL), 729-748 (NLEYLDASHNHVITLEGFRG), 749-772 (LMKLKHLDLSWNQLKKTGEEINVL), 776-802 (TTSLLTLDIQHNPWQKPATLRLSVIGR), 806-833 (LTHLDGLVISEEETRAALKFISGTKITQ), 876-898 (YSKITALNLDGQHLFEITNLEKL), 899-920 (ENLKWASFSNNNLSKMEGLESC), 921-942 (VNLEELTLDGNCISKIEGITRL), 943-965 (TKLSRLSMNNNLLTGLEKHTFDN), 967-991 (LHLHSLSLENNRITSLSALQKTFTL), 993-1010 (ELYISNNYIAVNQEIYNL), 1013-1037 (LCNLVILDMYGNIIIWNQENYRFFV), 1082-1105 (FIQMQELNWTSSAIRTVDLIPVDH), 1106-1128 (FRNVSNVNLQNNNLTSFSGLIYL), 1129-1151 (PNVKVLCLNYNHIESIMPRLKPQ), 1191-1214 (MQSLEVLHLGYNGICNLVQLQLNR), 1215-1237 (LRNLKFLFLQGNEISQVEGLDNL), 1238-1260 (IVLQELVVDHNRIRAFNDTAFSK), 1262-1283 (SSLLMLHLEENRLRELSKLQSL), 1284-1307 (VKLEKLFLGYNKIQDITELEKLDV), and 1309-1335 (PSLRELTVYGNPICRKMVHRHVLIFRL).

The chain is Leucine-rich repeat-containing protein 9 (Lrrc9) from Mus musculus (Mouse).